We begin with the raw amino-acid sequence, 199 residues long: uncharacterized protein (199 aa).

This is an uncharacterized protein from Connochaetes taurinus (Blue wildebeest).